The sequence spans 347 residues: S-adenosylmethionine:tRNA ribosyltransferase-isomerase (347 aa).

This sequence belongs to the QueA family. In terms of assembly, monomer.

Its subcellular location is the cytoplasm. The enzyme catalyses 7-aminomethyl-7-carbaguanosine(34) in tRNA + S-adenosyl-L-methionine = epoxyqueuosine(34) in tRNA + adenine + L-methionine + 2 H(+). The protein operates within tRNA modification; tRNA-queuosine biosynthesis. In terms of biological role, transfers and isomerizes the ribose moiety from AdoMet to the 7-aminomethyl group of 7-deazaguanine (preQ1-tRNA) to give epoxyqueuosine (oQ-tRNA). The chain is S-adenosylmethionine:tRNA ribosyltransferase-isomerase from Streptococcus thermophilus (strain ATCC BAA-491 / LMD-9).